The primary structure comprises 295 residues: Ethanolamine ammonia-lyase small subunit (295 aa).

Residues valine 207, glutamate 228, and cysteine 258 each contribute to the adenosylcob(III)alamin site.

The protein belongs to the EutC family. In terms of assembly, the basic unit is a heterodimer which dimerizes to form tetramers. The heterotetramers trimerize; 6 large subunits form a core ring with 6 small subunits projecting outwards. It depends on adenosylcob(III)alamin as a cofactor.

The protein localises to the bacterial microcompartment. The enzyme catalyses ethanolamine = acetaldehyde + NH4(+). The protein operates within amine and polyamine degradation; ethanolamine degradation. Functionally, catalyzes the deamination of various vicinal amino-alcohols to oxo compounds. Allows this organism to utilize ethanolamine as the sole source of nitrogen and carbon in the presence of external vitamin B12. This chain is Ethanolamine ammonia-lyase small subunit, found in Escherichia coli (strain 55989 / EAEC).